A 206-amino-acid chain; its full sequence is Protease (206 aa).

Catalysis depends on residues H55, D72, and C122.

Belongs to the peptidase C5 family. As to quaternary structure, interacts with protease cofactor pVI-C; this interaction is necessary for protease activation.

It localises to the virion. The protein localises to the host nucleus. The enzyme catalyses Cleaves proteins of the adenovirus and its host cell at two consensus sites: -Yaa-Xaa-Gly-Gly-|-Xaa- and -Yaa-Xaa-Gly-Xaa-|-Gly- (in which Yaa is Met, Ile or Leu, and Xaa is any amino acid).. With respect to regulation, requires DNA and protease cofactor for maximal activation. Inside nascent virions, becomes partially activated by binding to the viral DNA, allowing it to cleave the cofactor that binds to the protease and fully activates it. Actin, like the viral protease cofactor, seems to act as a cofactor in the cleavage of cytokeratin 18 and of actin itself. Cleaves viral precursor proteins (pTP, pIIIa, pVI, pVII, pVIII, and pX) inside newly assembled particles giving rise to mature virions. Protease complexed to its cofactor slides along the viral DNA to specifically locate and cleave the viral precursors. Mature virions have a weakened organization compared to the unmature virions, thereby facilitating subsequent uncoating. Without maturation, the particle lacks infectivity and is unable to uncoat. Late in adenovirus infection, in the cytoplasm, may participate in the cytoskeleton destruction. Cleaves host cell cytoskeletal keratins K7 and K18. This chain is Protease, found in Fowl adenovirus A serotype 1 (strain CELO / Phelps) (FAdV-1).